Reading from the N-terminus, the 58-residue chain is Small ribosomal subunit protein bS21 (58 aa).

Residues 30 to 58 (SEVRKREHYEKPSVKRKKKSEAARKRKFK) are disordered. Basic and acidic residues predominate over residues 31–42 (EVRKREHYEKPS). The span at 43–58 (VKRKKKSEAARKRKFK) shows a compositional bias: basic residues.

The protein belongs to the bacterial ribosomal protein bS21 family.

In Clostridium perfringens (strain ATCC 13124 / DSM 756 / JCM 1290 / NCIMB 6125 / NCTC 8237 / Type A), this protein is Small ribosomal subunit protein bS21.